A 501-amino-acid polypeptide reads, in one-letter code: Myosin heavy chain, embryonic smooth muscle isoform (501 aa).

The stretch at 1 to 457 forms a coiled coil; it reads REAREKETKA…TLKNRLRRGG (457 aa). The interval 1-501 is rodlike tail (S2 and LMM domains); the sequence is REAREKETKA…VNETQPPQSE (501 aa). Disordered regions lie at residues 182–202, 221–254, and 397–501; these read YQRE…QSKE, LASS…ALLD, and MEKA…PQSE. Residues 223-233 are compositionally biased toward basic and acidic residues; sequence SSERARRHAEQ. Residues 492-501 show a composition bias toward polar residues; sequence VNETQPPQSE.

Muscle myosin is a hexameric protein that consists of 2 heavy chain subunits (MHC), 2 alkali light chain subunits (MLC) and 2 regulatory light chain subunits (MLC-2).

It localises to the cytoplasm. The protein localises to the myofibril. In terms of biological role, muscle contraction. This Oryctolagus cuniculus (Rabbit) protein is Myosin heavy chain, embryonic smooth muscle isoform.